The following is a 241-amino-acid chain: Isoprenyl transferase (241 aa).

The active site involves D17. Residue D17 participates in Mg(2+) binding. Residues 18–21 (GNGR), W22, R30, H34, and 62–64 (STE) each bind substrate. The active-site Proton acceptor is the N65. Residues W66, R68, R186, and 192 to 194 (RLS) contribute to the substrate site. E205 is a Mg(2+) binding site.

It belongs to the UPP synthase family. As to quaternary structure, homodimer. Requires Mg(2+) as cofactor.

Its function is as follows. Catalyzes the condensation of isopentenyl diphosphate (IPP) with allylic pyrophosphates generating different type of terpenoids. This chain is Isoprenyl transferase, found in Leptospira interrogans serogroup Icterohaemorrhagiae serovar copenhageni (strain Fiocruz L1-130).